Reading from the N-terminus, the 300-residue chain is DPGSQGVGAEAENTGERTGGEAEAPAEGENGERSGGDAALGGESEGKAENESEGDIPAERRGDDEDEGEIQAEGGEVKGDEDEGEIQAGEGGEVEGDEDEGEIQAGEGGEVEGDEDEGEIQAGEGGEVEGDEDEGEIQAGEGGEVKDDEGEIQAGEAGEVEGEDGEVEGGEDEGEIQAGEGGEGETGEQELNAEIQGEAKDDEEGVDGEGGGDGGDSEDEEEEDEEEDEEEEEEEEEEEEEENEQPLSLEWPETRRKQAIYLFLLPIVFPLWLTVPDVRRLEAKKFFVITFLGSILWIAM.

Positions 1 to 251 (DPGSQGVGAE…ENEQPLSLEW (251 aa)) are disordered. Composition is skewed to acidic residues over residues 92 to 102 (GEVEGDEDEGE), 109 to 119 (GEVEGDEDEGE), 126 to 136 (GEVEGDEDEGE), 158 to 175 (GEVE…DEGE), and 215 to 244 (GDSE…EENE). A helical membrane pass occupies residues 259–275 (AIYLFLLPIVFPLWLTV).

This sequence belongs to the Ca(2+):cation antiporter (CaCA) (TC 2.A.19) family. SLC24A subfamily. In terms of processing, the uncleaved signal sequence is required for efficient membrane targeting and proper membrane integration and topology.

The protein localises to the cell membrane. The catalysed reaction is Ca(2+)(out) + K(+)(out) + 4 Na(+)(in) = Ca(2+)(in) + K(+)(in) + 4 Na(+)(out). In terms of biological role, calcium, potassium:sodium antiporter that transports 1 Ca(2+) and 1 K(+) in exchange for 4 Na(+). Critical component of the visual transduction cascade, controlling the calcium concentration of outer segments during light and darkness. Light causes a rapid lowering of cytosolic free calcium in the outer segment of both retinal rod and cone photoreceptors and the light-induced lowering of calcium is caused by extrusion via this protein which plays a key role in the process of light adaptation. The sequence is that of Sodium/potassium/calcium exchanger 1 (SLC24A1) from Bison bison (American bison).